The sequence spans 72 residues: Gas vesicle protein A (72 aa).

This sequence belongs to the gas vesicle GvpA family. In terms of assembly, the gas vesicle shell is 2 nm thick and consists of a single layer of this protein. It forms helical ribs nearly perpendicular to the long axis of the vesicle.

It is found in the gas vesicle shell. Functionally, gas vesicles are hollow, gas filled proteinaceous nanostructures found in some microorganisms. During planktonic growth they allow positioning of the organism at a favorable depth for light or nutrient acquisition. GvpA forms the protein shell. The polypeptide is Gas vesicle protein A (Planktothrix agardhii (Oscillatoria agardhii)).